A 341-amino-acid chain; its full sequence is uncharacterized protein (341 aa).

Residues 315–337 (VAAWFSGIAGGTFLALKLVSLMM) form a helical membrane-spanning segment.

It localises to the cell membrane. This is an uncharacterized protein from Bacillus subtilis (strain 168).